A 202-amino-acid polypeptide reads, in one-letter code: ATP-dependent Clp protease proteolytic subunit (202 aa).

The active-site Nucleophile is S106. The active site involves H131.

The protein belongs to the peptidase S14 family. In terms of assembly, fourteen ClpP subunits assemble into 2 heptameric rings which stack back to back to give a disk-like structure with a central cavity, resembling the structure of eukaryotic proteasomes.

Its subcellular location is the cytoplasm. The enzyme catalyses Hydrolysis of proteins to small peptides in the presence of ATP and magnesium. alpha-casein is the usual test substrate. In the absence of ATP, only oligopeptides shorter than five residues are hydrolyzed (such as succinyl-Leu-Tyr-|-NHMec, and Leu-Tyr-Leu-|-Tyr-Trp, in which cleavage of the -Tyr-|-Leu- and -Tyr-|-Trp bonds also occurs).. In terms of biological role, cleaves peptides in various proteins in a process that requires ATP hydrolysis. Has a chymotrypsin-like activity. Plays a major role in the degradation of misfolded proteins. In Acidovorax ebreus (strain TPSY) (Diaphorobacter sp. (strain TPSY)), this protein is ATP-dependent Clp protease proteolytic subunit.